The primary structure comprises 37 residues: MVEPLLSGIVLGLVPVTIAGLFVTAYLQYRRGDQATW.

A helical transmembrane segment spans residues 5–25; sequence LLSGIVLGLVPVTIAGLFVTA.

This sequence belongs to the PetG family. As to quaternary structure, the 4 large subunits of the cytochrome b6-f complex are cytochrome b6, subunit IV (17 kDa polypeptide, PetD), cytochrome f and the Rieske protein, while the 4 small subunits are PetG, PetL, PetM and PetN. The complex functions as a dimer.

The protein resides in the plastid. Its subcellular location is the chloroplast thylakoid membrane. Component of the cytochrome b6-f complex, which mediates electron transfer between photosystem II (PSII) and photosystem I (PSI), cyclic electron flow around PSI, and state transitions. PetG is required for either the stability or assembly of the cytochrome b6-f complex. The polypeptide is Cytochrome b6-f complex subunit 5 (Stigeoclonium helveticum (Green alga)).